The sequence spans 199 residues: dITP/XTP pyrophosphatase (199 aa).

A substrate-binding site is contributed by 8-13; that stretch reads SGNAGK. Asp69 acts as the Proton acceptor in catalysis. Residue Asp69 participates in Mg(2+) binding. Residues Ser70, 154–157, Lys177, and 182–183 each bind substrate; these read FGYN and HR.

The protein belongs to the HAM1 NTPase family. As to quaternary structure, homodimer. Mg(2+) serves as cofactor.

The catalysed reaction is XTP + H2O = XMP + diphosphate + H(+). It catalyses the reaction dITP + H2O = dIMP + diphosphate + H(+). It carries out the reaction ITP + H2O = IMP + diphosphate + H(+). Pyrophosphatase that catalyzes the hydrolysis of nucleoside triphosphates to their monophosphate derivatives, with a high preference for the non-canonical purine nucleotides XTP (xanthosine triphosphate), dITP (deoxyinosine triphosphate) and ITP. Seems to function as a house-cleaning enzyme that removes non-canonical purine nucleotides from the nucleotide pool, thus preventing their incorporation into DNA/RNA and avoiding chromosomal lesions. The protein is dITP/XTP pyrophosphatase of Xylella fastidiosa (strain Temecula1 / ATCC 700964).